Reading from the N-terminus, the 483-residue chain is MERRQSICPQGRLPLYSAVVRSTSDIQASVRFASRHNLRLVIKNTGHDSAGRSSAPHSFQIHTSLLQNISLHKNFIARGSTTGRGPAVTLGAGVMQWQAYVHGAKNGYTILGGECPTVGAVGGFLQGGGVSSIHSFTRGLAVDQVLEYQVVSANGDLITANEDNNQDLFWALKGGGGGTFGVVTEATVRVFSDDPVTVTSTKIEAAAANVLFWKEGVHELLRLLQRFNNLHVAGQLVISAPTKDSLQAGLELHFANLTDETQAIQLLRSEARALETHGISASTSVRVQRKASSELRMKPDVYPPHYGILEASVLISAATFHANDGPALIASKLSGLTLKPNDILFTSNLGGRVSENTAIEIALHPAWREAAQLVTLVRVVEPSIEGKLSALNNLTARDVPILYSIDPAAKISYRNLGDPQEKEFQTRYWGADNYARLAATKAAWDPSHLFMTSLGVGSEVWDAEGICRKRRGFRAKASSLIGM.

The FAD-binding PCMH-type domain occupies 10 to 193 (QGRLPLYSAV…TEATVRVFSD (184 aa)).

This sequence belongs to the oxygen-dependent FAD-linked oxidoreductase family. Requires FAD as cofactor.

Its pathway is alkaloid biosynthesis; ergot alkaloid biosynthesis. Its function is as follows. FAD-linked oxidoreductase; part of the gene cluster that mediates the biosynthesis of fungal ergot alkaloid. DmaW catalyzes the first step of ergot alkaloid biosynthesis by condensing dimethylallyl diphosphate (DMAP) and tryptophan to form 4-dimethylallyl-L-tryptophan. The second step is catalyzed by the methyltransferase easF that methylates 4-dimethylallyl-L-tryptophan in the presence of S-adenosyl-L-methionine, resulting in the formation of 4-dimethylallyl-L-abrine. The catalase easC and the FAD-dependent oxidoreductase easE then transform 4-dimethylallyl-L-abrine to chanoclavine-I which is further oxidized by easD in the presence of NAD(+), resulting in the formation of chanoclavine-I aldehyde. Agroclavine dehydrogenase easG then mediates the conversion of chanoclavine-I aldehyde to agroclavine via a non-enzymatic adduct reaction: the substrate is an iminium intermediate that is formed spontaneously from chanoclavine-I aldehyde in the presence of glutathione. The presence of easA is not required to complete this reaction. Further conversion of agroclavine to paspalic acid is a two-step process involving oxidation of agroclavine to elymoclavine and of elymoclavine to paspalic acid, the second step being performed by the elymoclavine oxidase cloA. Paspalic acid is then further converted to D-lysergic acid. Ergopeptines are assembled from D-lysergic acid and three different amino acids by the D-lysergyl-peptide-synthetases composed each of a monomudular and a trimodular nonribosomal peptide synthetase subunit. LpsB and lpsC encode the monomodular subunits responsible for D-lysergic acid activation and incorporation into the ergopeptine backbone. LpsA1 and A2 subunits encode the trimodular nonribosomal peptide synthetase assembling the tripeptide portion of ergopeptines. LpsA1 is responsible for formation of the major ergopeptine, ergotamine, and lpsA2 for alpha-ergocryptine, the minor ergopeptine of the total alkaloid mixture elaborated by C.purpurea. D-lysergyl-tripeptides are assembled by the nonribosomal peptide synthetases and released as N-(D-lysergyl-aminoacyl)-lactams. Cyclolization of the D-lysergyl-tripeptides is performed by the Fe(2+)/2-ketoglutarate-dependent dioxygenase easH which introduces a hydroxyl group into N-(D-lysergyl-aminoacyl)-lactam at alpha-C of the aminoacyl residue followed by spontaneous condensation with the terminal lactam carbonyl group. This Claviceps purpurea (Ergot fungus) protein is FAD-linked oxidoreductase easE.